Here is an 855-residue protein sequence, read N- to C-terminus: Glucans biosynthesis glucosyltransferase H (855 aa).

6 helical membrane passes run 142-162 (ILLT…KGIL), 196-216 (ILVL…TALM), 515-535 (VFLT…FLVL), 572-592 (LFST…ILIW), 606-626 (TLSM…RMIF), and 682-702 (FLWW…VSVI).

Belongs to the glycosyltransferase 2 family. OpgH subfamily.

Its subcellular location is the cell inner membrane. Its pathway is glycan metabolism; osmoregulated periplasmic glucan (OPG) biosynthesis. Functionally, involved in the biosynthesis of osmoregulated periplasmic glucans (OPGs). The protein is Glucans biosynthesis glucosyltransferase H of Pseudomonas entomophila (strain L48).